The chain runs to 553 residues: Zinc finger protein 426 (553 aa).

The KRAB domain maps to 40–111 (VSFDDVIVDF…KIVFPEWKIQ (72 aa)). 11 C2H2-type zinc fingers span residues 222 to 244 (FECSDCGKSFMNQSHLQTHQRTH), 277 to 299 (HRCKECGKGYRYPAYLNIHMRTH), 305 to 327 (YECKECGKAFNYSNSFQIHGRTH), 333 to 355 (YVCNQCGKAFTQHSGLSIHVRSH), 361 to 383 (YACKECGKAFLTSSRLIQHIRTH), 389 to 411 (FVCVKCGKAFAISSNLNGHLKMH), 417 to 439 (CECKICGKAFGYLSCLNNHMRTH), 445 to 467 (YTCKECGKAFNYSTHLKIHMRIH), 473 to 495 (YECKQCGKAFSHSTSFQIHERTH), 501 to 525 (YECKECGKAFICPSSFRIHEISHTH), and 531 to 553 (YKCQQCGKAYSHPRSLRRHERIH).

The protein localises to the nucleus. May be involved in transcriptional regulation. The sequence is that of Zinc finger protein 426 (Znf426) from Rattus norvegicus (Rat).